A 424-amino-acid chain; its full sequence is 3-isopropylmalate dehydratase large subunit 1 (424 aa).

Cys303, Cys363, and Cys366 together coordinate [4Fe-4S] cluster.

The protein belongs to the aconitase/IPM isomerase family. LeuC type 2 subfamily. As to quaternary structure, heterodimer of LeuC and LeuD. Requires [4Fe-4S] cluster as cofactor.

The enzyme catalyses (2R,3S)-3-isopropylmalate = (2S)-2-isopropylmalate. It functions in the pathway amino-acid biosynthesis; L-leucine biosynthesis; L-leucine from 3-methyl-2-oxobutanoate: step 2/4. Its function is as follows. Catalyzes the isomerization between 2-isopropylmalate and 3-isopropylmalate, via the formation of 2-isopropylmaleate. In Pyrococcus furiosus (strain ATCC 43587 / DSM 3638 / JCM 8422 / Vc1), this protein is 3-isopropylmalate dehydratase large subunit 1.